Reading from the N-terminus, the 357-residue chain is Membrane-bound lytic murein transglycosylase C (357 aa).

Positions 1–15 (MKKYLLLALLPFLYA) are cleaved as a signal peptide. Cys-16 carries N-palmitoyl cysteine lipidation. Cys-16 carries the S-diacylglycerol cysteine lipid modification.

This sequence belongs to the transglycosylase Slt family.

It localises to the cell outer membrane. It carries out the reaction Exolytic cleavage of the (1-&gt;4)-beta-glycosidic linkage between N-acetylmuramic acid (MurNAc) and N-acetylglucosamine (GlcNAc) residues in peptidoglycan, from either the reducing or the non-reducing ends of the peptidoglycan chains, with concomitant formation of a 1,6-anhydrobond in the MurNAc residue.. In terms of biological role, murein-degrading enzyme. May play a role in recycling of muropeptides during cell elongation and/or cell division. In Haemophilus influenzae (strain ATCC 51907 / DSM 11121 / KW20 / Rd), this protein is Membrane-bound lytic murein transglycosylase C.